An 843-amino-acid polypeptide reads, in one-letter code: Protein P (843 aa).

Positions 1–177 are terminal protein domain (TP); the sequence is MPLSYPHFRK…FCGSPYSWEQ (177 aa). The spacer stretch occupies residues 178–346; it reads ELQHGSTSLN…YCLSHIINLL (169 aa). The segment at 284–308 is disordered; sequence EANPSLSTSKRHTSTGNAVELNPVP. The segment at 347–690 is polymerase/reverse transcriptase domain (RT); sequence EDWGPCYEHG…YMNLYPVARQ (344 aa). The 244-residue stretch at 357–600 folds into the Reverse transcriptase domain; sequence QHHIRTPRTP…YNLHFMGYVI (244 aa). Positions 429, 551, and 552 each coordinate Mg(2+).

It belongs to the hepadnaviridae P protein family.

It catalyses the reaction DNA(n) + a 2'-deoxyribonucleoside 5'-triphosphate = DNA(n+1) + diphosphate. The catalysed reaction is Endonucleolytic cleavage to 5'-phosphomonoester.. Activated by host HSP70 and HSP40 in vitro to be able to bind the epsilon loop of the pgRNA. Because deletion of the RNase H region renders the protein partly chaperone-independent, the chaperones may be needed indirectly to relieve occlusion of the RNA-binding site by this domain. Inhibited by several reverse-transcriptase inhibitors: Lamivudine, Adefovir and Entecavir. In terms of biological role, multifunctional enzyme that converts the viral RNA genome into dsDNA in viral cytoplasmic capsids. This enzyme displays a DNA polymerase activity that can copy either DNA or RNA templates, and a ribonuclease H (RNase H) activity that cleaves the RNA strand of RNA-DNA heteroduplexes in a partially processive 3'- to 5'-endonucleasic mode. Neo-synthesized pregenomic RNA (pgRNA) are encapsidated together with the P protein, and reverse-transcribed inside the nucleocapsid. Initiation of reverse-transcription occurs first by binding the epsilon loop on the pgRNA genome, and is initiated by protein priming, thereby the 5'-end of (-)DNA is covalently linked to P protein. Partial (+)DNA is synthesized from the (-)DNA template and generates the relaxed circular DNA (RC-DNA) genome. After budding and infection, the RC-DNA migrates in the nucleus, and is converted into a plasmid-like covalently closed circular DNA (cccDNA). The activity of P protein does not seem to be necessary for cccDNA generation, and is presumably released from (+)DNA by host nuclear DNA repair machinery. The protein is Protein P of Homo sapiens (Human).